Consider the following 392-residue polypeptide: Phosphoglycerate kinase (392 aa).

Substrate is bound by residues 21–23 (DFN), Arg-36, 59–62 (HLGR), Arg-118, and Arg-151. ATP-binding positions include Lys-201, Gly-292, Glu-323, and 349-352 (GGDS).

This sequence belongs to the phosphoglycerate kinase family. Monomer.

It is found in the cytoplasm. It carries out the reaction (2R)-3-phosphoglycerate + ATP = (2R)-3-phospho-glyceroyl phosphate + ADP. It functions in the pathway carbohydrate degradation; glycolysis; pyruvate from D-glyceraldehyde 3-phosphate: step 2/5. This chain is Phosphoglycerate kinase, found in Borrelia hermsii (strain HS1 / DAH).